The chain runs to 326 residues: Type II methyltransferase M.EcoRI (326 aa).

The protein belongs to the N(4)/N(6)-methyltransferase family. Monomer.

The enzyme catalyses a 2'-deoxyadenosine in DNA + S-adenosyl-L-methionine = an N(6)-methyl-2'-deoxyadenosine in DNA + S-adenosyl-L-homocysteine + H(+). In terms of biological role, a methylase that recognizes the double-stranded sequence 5'-GAATTC-3', methylates A-3 on both strands, and protects the DNA from cleavage by the EcoRI endonuclease. The chain is Type II methyltransferase M.EcoRI (ecoRIM) from Escherichia coli.